An 80-amino-acid polypeptide reads, in one-letter code: RNA-binding protein Hfq (80 aa).

Positions 10-69 (DPFLNLLRKEHVPVSIYLVNGIKLQGHIESFDQYVVLLRNTVTQMVYKHAISTVVPGRPV) constitute a Sm domain.

Belongs to the Hfq family. As to quaternary structure, homohexamer.

Its function is as follows. RNA chaperone that binds small regulatory RNA (sRNAs) and mRNAs to facilitate mRNA translational regulation in response to envelope stress, environmental stress and changes in metabolite concentrations. Also binds with high specificity to tRNAs. The protein is RNA-binding protein Hfq of Leptothrix cholodnii (strain ATCC 51168 / LMG 8142 / SP-6) (Leptothrix discophora (strain SP-6)).